A 74-amino-acid polypeptide reads, in one-letter code: Heat shock factor-binding protein 1-like protein 1 (74 aa).

The stretch at 12-65 (RALRDAAENLFQELQEHFQALTATLNLRMEEMGNRIEDLQKNVKDLMVQAGIEN) forms a coiled coil.

The protein belongs to the HSBP1 family.

This is Heat shock factor-binding protein 1-like protein 1 (HSBP1L1) from Homo sapiens (Human).